Consider the following 471-residue polypeptide: Light-independent protochlorophyllide reductase subunit N (471 aa).

The [4Fe-4S] cluster site is built by cysteine 22, cysteine 47, and cysteine 107.

The protein belongs to the BchN/ChlN family. Protochlorophyllide reductase is composed of three subunits; ChlL, ChlN and ChlB. Forms a heterotetramer of two ChlB and two ChlN subunits. Requires [4Fe-4S] cluster as cofactor.

It localises to the plastid. Its subcellular location is the chloroplast. The enzyme catalyses chlorophyllide a + oxidized 2[4Fe-4S]-[ferredoxin] + 2 ADP + 2 phosphate = protochlorophyllide a + reduced 2[4Fe-4S]-[ferredoxin] + 2 ATP + 2 H2O. The protein operates within porphyrin-containing compound metabolism; chlorophyll biosynthesis (light-independent). In terms of biological role, component of the dark-operative protochlorophyllide reductase (DPOR) that uses Mg-ATP and reduced ferredoxin to reduce ring D of protochlorophyllide (Pchlide) to form chlorophyllide a (Chlide). This reaction is light-independent. The NB-protein (ChlN-ChlB) is the catalytic component of the complex. This is Light-independent protochlorophyllide reductase subunit N from Huperzia lucidula (Shining clubmoss).